A 331-amino-acid polypeptide reads, in one-letter code: Uroporphyrinogen decarboxylase (331 aa).

Residues 22–26 (RQAGR), aspartate 71, tyrosine 145, serine 199, and histidine 308 contribute to the substrate site.

Belongs to the uroporphyrinogen decarboxylase family. In terms of assembly, homodimer.

The protein localises to the cytoplasm. The enzyme catalyses uroporphyrinogen III + 4 H(+) = coproporphyrinogen III + 4 CO2. The protein operates within porphyrin-containing compound metabolism; protoporphyrin-IX biosynthesis; coproporphyrinogen-III from 5-aminolevulinate: step 4/4. In terms of biological role, catalyzes the decarboxylation of four acetate groups of uroporphyrinogen-III to yield coproporphyrinogen-III. In Picrophilus torridus (strain ATCC 700027 / DSM 9790 / JCM 10055 / NBRC 100828 / KAW 2/3), this protein is Uroporphyrinogen decarboxylase.